A 1003-amino-acid chain; its full sequence is NACHT, LRR and PYD domains-containing protein 9B (1003 aa).

A Pyrin domain is found at 1–91 (MAGSSGYGLL…SIMAQKKKRH (91 aa)). The NACHT domain maps to 143–465 (VTAIVAGTTG…QDKDICVPVI (323 aa)). ATP is bound at residue 149–156 (GTTGEGKT). LRR repeat units follow at residues 749 to 770 (KVKH…SLCE), 778 to 799 (VLQS…HLYE), 806 to 826 (HLSL…NLLC), 835 to 856 (TLKE…EISA), 863 to 883 (NLKT…RQLC), 892 to 913 (NLEC…DLAL), and 920 to 940 (TLNS…VVLC).

Sensor component of NLRP9 inflammasomes. Inflammasomes are supramolecular complexes that assemble in the cytosol in response to pathogens, such as rotavirus, but not encephalomyocarditis virus (EMCV), and play critical roles in innate immunity and inflammation. The core of NLRP9 inflammasomes consists of a signal sensor component (NLRP9), an adapter (ASC/PYCARD), which recruits an effector pro-inflammatory caspase (CASP1). Within the complex, NLRP9 and PYCARD interact via their respective DAPIN/pyrin domains. This interaction initiates speck formation (nucleation) which greatly enhances further addition of soluble PYCARD molecules to the speck in a prion-like polymerization process. Clustered PYCARD nucleates the formation of CASP1 filaments through the interaction of their respective CARD domains, acting as a platform for CASP1 polymerization. CASP1 filament formation increases local enzyme concentration, resulting in trans-autocleavage and activation. Active CASP1 then processes IL1B and IL18 precursors, leading to the release of mature cytokines in the extracellular milieu and inflammatory response. Interacts with DHX9 upon rotavirus infection; this interaction may trigger inflammasome activation and inflammatory response. As to expression, predominantly expressed in the intestine, including proximal and distal colon, cecum, ileum, jejunum and duodenum (at protein level). In the ileum, expressed in epithelial cells. Also expressed in oocytes at all follicular stages and in preimplantation embryos (at protein level). Although expression decreases in preimplantation embryos, it is still detectable in blastocyts.

The protein resides in the cytoplasm. It localises to the inflammasome. Functionally, as the sensor component of the NLRP9 inflammasome, plays a crucial role in innate immunity and inflammation. In response to pathogens, including rotavirus, initiates the formation of the inflammasome polymeric complex, made of NLRP9, PYCARD and CASP1. Recruitment of proCASP1 to the inflammasome promotes its activation and CASP1-catalyzed IL1B and IL18 maturation and release in the extracellular milieu. The active cytokines stimulate inflammatory responses. Inflammasomes can also induce pyroptosis, an inflammatory form of programmed cell death. NLRP9 inflammasome activation may be initiated by DHX9 interaction with viral double-stranded RNA (dsRNA), preferentially to short dsRNA segments. In Mus musculus (Mouse), this protein is NACHT, LRR and PYD domains-containing protein 9B (Nlrp9b).